Here is a 650-residue protein sequence, read N- to C-terminus: Rab proteins geranylgeranyltransferase component A 1 (650 aa).

Disordered regions lie at residues 156 to 208 (IPAE…ETPK) and 603 to 650 (PAPP…EPSE). The segment covering 177 to 190 (ATGKKENSDAKSST) has biased composition (basic and acidic residues). The span at 616–634 (DSSQQEVPESSVTPETNSE) shows a compositional bias: polar residues.

It belongs to the Rab GDI family. In terms of assembly, monomer. Heterotrimer composed of RABGGTA, RABGGTB and CHM; within this trimer, RABGGTA and RABGGTB form the catalytic component B, while CHM (component A) mediates Rab protein binding. Can associate with the Rab GGTase dimer (RGGT or component B) prior to Rab protein binding; the association is stabilized by geranylgeranyl pyrophosphate (GGpp). The CHM:RGGT:Rab complex is destabilized by GGpp. Interacts with RAB1A, RAB1B, RAB7A and RAB27A and mediates their prenylation. Interacts with RAB5A. Interacts with the non-phosphorylated forms of RAB3A, RAB3B, RAB3C, RAB3D, RAB5B, RAB5C RAB8A, RAB8B, RAB10, RAB12, RAB35, and RAB43. As to expression, most abundant in the heart, brain, and spleen. Lower levels seen in the lung, liver, muscle and kidney. Extremely low levels seen in the testis.

The protein localises to the cytoplasm. It localises to the cytosol. Substrate-binding subunit of the Rab geranylgeranyltransferase (GGTase) complex. Binds unprenylated Rab proteins and presents the substrate peptide to the catalytic component B composed of RABGGTA and RABGGTB, and remains bound to it after the geranylgeranyl transfer reaction. The component A is thought to be regenerated by transferring its prenylated Rab back to the donor membrane. Besides, a pre-formed complex consisting of CHM and the Rab GGTase dimer (RGGT or component B) can bind to and prenylate Rab proteins; this alternative pathway is proposed to be the predominant pathway for Rab protein geranylgeranylation. This Rattus norvegicus (Rat) protein is Rab proteins geranylgeranyltransferase component A 1 (Chm).